We begin with the raw amino-acid sequence, 130 residues long: 3-aminoacrylate deaminase RutC (130 aa).

Belongs to the RutC family.

The enzyme catalyses (Z)-3-aminoacrylate + H2O + H(+) = 3-oxopropanoate + NH4(+). Its function is as follows. Involved in pyrimidine catabolism. Catalyzes the deamination of 3-aminoacrylate to malonic semialdehyde, a reaction that can also occur spontaneously. RutC may facilitate the reaction and modulate the metabolic fitness, rather than catalyzing essential functions. In Variovorax paradoxus (strain S110), this protein is 3-aminoacrylate deaminase RutC.